A 371-amino-acid polypeptide reads, in one-letter code: MEYDAYNDSGIYDDEYSDGFGYFVDLEEASPWEAKVAPVFLVVIYSLVCFLGLLGNGLVIVIATFKMKKTVNTVWFVNLAVADFLFNIFLPMHITYAAMDYHWVFGKAMCKISNFLLSHNMYTSVFLLTVISFDRCISVLLPVWSQNHRSIRLAYMTCSAVWVLAFFLSSPSLVFRDTANIHGKITCFNNFSLAAPESSPHPAHSQVVSTGYSRHVAVTVTRFLCGFLIPVFIITACYLTIVFKLQRNRLAKNKKPFKIIITIIITFFLCWCPYHTLYLLELHHTAVPSSVFSLGLPLATAVAIANSCMNPILYVFMGHDFRKFKVALFSRLANALSEDTGPSSYPSHRSFTKMSSLNEKASVNEKETSTL.

The Extracellular portion of the chain corresponds to 1 to 39; it reads MEYDAYNDSGIYDDEYSDGFGYFVDLEEASPWEAKVAPV. A glycan (N-linked (GlcNAc...) asparagine) is linked at asparagine 7. A helical membrane pass occupies residues 40–62; that stretch reads FLVVIYSLVCFLGLLGNGLVIVI. At 63-73 the chain is on the cytoplasmic side; the sequence is ATFKMKKTVNT. The chain crosses the membrane as a helical span at residues 74-95; that stretch reads VWFVNLAVADFLFNIFLPMHIT. The Extracellular segment spans residues 96 to 112; sequence YAAMDYHWVFGKAMCKI. A disulfide bond links cysteine 110 and cysteine 187. A helical transmembrane segment spans residues 113–133; the sequence is SNFLLSHNMYTSVFLLTVISF. Over 134 to 152 the chain is Cytoplasmic; sequence DRCISVLLPVWSQNHRSIR. A helical transmembrane segment spans residues 153-174; it reads LAYMTCSAVWVLAFFLSSPSLV. Residues 175–222 lie on the Extracellular side of the membrane; that stretch reads FRDTANIHGKITCFNNFSLAAPESSPHPAHSQVVSTGYSRHVAVTVTR. An N-linked (GlcNAc...) asparagine glycan is attached at asparagine 190. A helical membrane pass occupies residues 223 to 243; that stretch reads FLCGFLIPVFIITACYLTIVF. Over 244 to 259 the chain is Cytoplasmic; that stretch reads KLQRNRLAKNKKPFKI. A helical membrane pass occupies residues 260–280; that stretch reads IITIIITFFLCWCPYHTLYLL. Over 281-298 the chain is Extracellular; it reads ELHHTAVPSSVFSLGLPL. Residues 299 to 318 form a helical membrane-spanning segment; the sequence is ATAVAIANSCMNPILYVFMG. Over 319-371 the chain is Cytoplasmic; it reads HDFRKFKVALFSRLANALSEDTGPSSYPSHRSFTKMSSLNEKASVNEKETSTL. Position 337 is a phosphoserine (serine 337). A Phosphothreonine modification is found at threonine 340. Serine 347, serine 350, and serine 356 each carry phosphoserine. Residue threonine 370 is modified to Phosphothreonine.

The protein belongs to the chemokine-like receptor (CMKLR) family. In terms of tissue distribution, expressed in the differentiated adipocytes (at protein level). Ubiquitous. Highly expressed in adipose tissue and immature plasmacytoid dendritic cells (DCs) and at lower levels in myeloid DCs, macrophages, and NK cells. Expressed on macrophages isolated from different tissues, including peritoneal cavities, pleural cavities and spleen.

The protein localises to the cell membrane. Its function is as follows. Receptor for the chemoattractant adipokine chemerin/RARRES2 and for the omega-3 fatty acid derived molecule resolvin E1. Interaction with RARRES2 initiates activation of G proteins G(i)/G(o) and beta-arrestin pathways inducing cellular responses via second messenger pathways such as intracellular calcium mobilization, phosphorylation of MAP kinases MAPK1/MAPK3 (ERK1/2), TYRO3, MAPK14/P38MAPK and PI3K leading to multifunctional effects, like, reduction of immune responses, enhancing of adipogenesis and angionesis. Resolvin E1 down-regulates cytokine production in macrophages by reducing the activation of MAPK1/3 (ERK1/2) and NF-kappa-B. Positively regulates adipogenesis and adipocyte metabolism. This chain is Chemerin-like receptor 1 (Cmklr1), found in Mus musculus (Mouse).